The chain runs to 477 residues: ACT domain-containing protein ACR1 (477 aa).

4 ACT domains span residues 38 to 124 (LIKV…REVQ), 134 to 214 (AFEI…GDVS), 283 to 358 (MVNV…RASQ), and 361 to 441 (KLEI…MMPR). The Bipartite nuclear localization signal signature appears at 329 to 345 (KKNGGTLETEGQRERLR).

As to expression, expressed in flowers and siliques.

It localises to the nucleus. Its function is as follows. May bind amino acids. This Arabidopsis thaliana (Mouse-ear cress) protein is ACT domain-containing protein ACR1.